The sequence spans 478 residues: Sugar transporter ERD6-like 18 (478 aa).

The next 12 membrane-spanning stretches (helical) occupy residues 31 to 51 (ITAC…SFGV), 71 to 91 (IAQF…GALF), 110 to 130 (LLCI…WLNF), 133 to 153 (ISSG…IAEI), 162 to 180 (FTFT…VYFS), 188 to 208 (ILAL…FFVP), 270 to 290 (TLVV…SAVL), 306 to 326 (IGST…VILV), 333 to 353 (PLLL…GVAF), 367 to 387 (VFTF…LGGL), 407 to 427 (IVTL…NFLL), and 433 to 453 (GTFY…WLLV).

It belongs to the major facilitator superfamily. Sugar transporter (TC 2.A.1.1) family. In terms of tissue distribution, expressed in leaf vasculature, stem and flowers.

Its subcellular location is the membrane. In terms of biological role, sugar transporter. This Arabidopsis thaliana (Mouse-ear cress) protein is Sugar transporter ERD6-like 18 (SFP2).